The primary structure comprises 139 residues: Phosphoribosyl-AMP cyclohydrolase (139 aa).

Residue D92 participates in Mg(2+) binding. C93 provides a ligand contact to Zn(2+). Mg(2+)-binding residues include D94 and D96. Zn(2+) is bound by residues C111 and C118.

The protein belongs to the PRA-CH family. In terms of assembly, homodimer. The cofactor is Mg(2+). Requires Zn(2+) as cofactor.

The protein resides in the cytoplasm. It carries out the reaction 1-(5-phospho-beta-D-ribosyl)-5'-AMP + H2O = 1-(5-phospho-beta-D-ribosyl)-5-[(5-phospho-beta-D-ribosylamino)methylideneamino]imidazole-4-carboxamide. The protein operates within amino-acid biosynthesis; L-histidine biosynthesis; L-histidine from 5-phospho-alpha-D-ribose 1-diphosphate: step 3/9. Functionally, catalyzes the hydrolysis of the adenine ring of phosphoribosyl-AMP. The protein is Phosphoribosyl-AMP cyclohydrolase of Caulobacter vibrioides (strain ATCC 19089 / CIP 103742 / CB 15) (Caulobacter crescentus).